Consider the following 362-residue polypeptide: Cobalt-precorrin-5B C(1)-methyltransferase (362 aa).

Belongs to the CbiD family.

It catalyses the reaction Co-precorrin-5B + S-adenosyl-L-methionine = Co-precorrin-6A + S-adenosyl-L-homocysteine. It participates in cofactor biosynthesis; adenosylcobalamin biosynthesis; cob(II)yrinate a,c-diamide from sirohydrochlorin (anaerobic route): step 6/10. Functionally, catalyzes the methylation of C-1 in cobalt-precorrin-5B to form cobalt-precorrin-6A. The polypeptide is Cobalt-precorrin-5B C(1)-methyltransferase (Geotalea daltonii (strain DSM 22248 / JCM 15807 / FRC-32) (Geobacter daltonii)).